The sequence spans 753 residues: Glycerophosphodiester phosphodiesterase GDPDL6 (753 aa).

The signal sequence occupies residues 1 to 17 (MLRFFILFSLFLHSSVA). GP-PDE domains follow at residues 41-339 (PAVV…SQSI) and 355-654 (ALVI…TRYL). Residues asparagine 304, asparagine 516, asparagine 603, and asparagine 715 are each glycosylated (N-linked (GlcNAc...) asparagine). The tract at residues 707–729 (PPVAKLASNGTEGGPPQTPPRSG) is disordered. A helical transmembrane segment spans residues 731 to 751 (VAIAANLSLSLLAMMALGLLY).

Belongs to the glycerophosphoryl diester phosphodiesterase family. Expressed in flowers and siliques.

Its subcellular location is the membrane. It catalyses the reaction a sn-glycero-3-phosphodiester + H2O = an alcohol + sn-glycerol 3-phosphate + H(+). This Arabidopsis thaliana (Mouse-ear cress) protein is Glycerophosphodiester phosphodiesterase GDPDL6.